The sequence spans 2799 residues: Peramine synthetase ppzA (2799 aa).

The segment at 270–666 (QERCRLQPNA…VGRKDTQVKI (397 aa)) is adenylation 1. Residues 799–875 (QPLTGMERLL…DLSRQSRYIE (77 aa)) form the Carrier 1 domain. Position 836 is an O-(pantetheine 4'-phosphoryl)serine (S836). Positions 914 to 1327 (DAYPCTPLQE…ITILTTEDLE (414 aa)) are condensation. The interval 1350 to 1743 (DKVQARPNAP…TLSFVRRKDT (394 aa)) is adenylation 2. The segment at 1874-1970 (LEIGCGSGMM…EYLVKLIQDI (97 aa)) is methylation (Met) domain. The region spanning 2290-2368 (SPTTDMEKEL…RLLLDCCCDD (79 aa)) is the Carrier 2 domain. At S2327 the chain carries O-(pantetheine 4'-phosphoryl)serine. The thiesterase (TE) domain stretch occupies residues 2420 to 2737 (TVLLTGANGF…LADMLQDLED (318 aa)).

This sequence belongs to the NRP synthetase family. Requires pantetheine 4'-phosphate as cofactor.

The enzyme catalyses (S)-1-pyrroline-5-carboxylate + L-arginine + S-adenosyl-L-methionine + 2 ATP = peramine + 2 AMP + S-adenosyl-L-homocysteine + 2 diphosphate + H2O + 2 H(+). Its pathway is secondary metabolite biosynthesis. Functionally, nonribosomal peptide synthetase; part of the gene cluster that mediates the biosynthesis of pyrrolopyrazines, secondary metabolites showing insecticidal activity. The single multifunctional NRPS ppzA is responsible for the biosynthesis of peramine. The condensation domain of ppzA is proposed to catalyze formation of a peptide bond between 1-pyrroline-5-carboxylate and arginine. The methylation domain of ppzA would catalyze the N-methylation of the alpha-amino group of arginine. The reductase domain is proposed to be responsible for reduction of the thioester and the cyclization to form an iminium ion resulting in release from the peptide synthetase. Deprotonation of this intermediate and oxidation of the pyrroline ring would give rise to peramine. This final oxidation to give the pyrrole functionality may be spontaneous. In Epichloe species that produce only peramine, the peramine synthetase gene is not localized in a gene cluster, in contrast to Metarhizium species that contain additional pyrrolopyrazine biosynthesis genes. The 2-oxoglutarate-Fe(II) type oxidoreductase ppzC hydroxylates peramine to yield the newly identified compound 8-hydroxyperamine whereas ppzD converts L-proline into trans-4-hydroxy-L-proline, a precursor of peramine biosynthesis. The polypeptide is Peramine synthetase ppzA (Metarhizium majus (strain ARSEF 297)).